The chain runs to 577 residues: MRSHFCAEISEKDVGKTIKVAGWCNTYRDHGGVVFIDLRDKSGLVQLVCDPSSKAYEKALEVRSEFVLVAKGKARLRGPGLENPKLKTGKIEIVLEELVIENKSATPPIEIGNKNVNEDLRLKYRYLDLRSLNAYEIFKLRSEVALIARNALAQKGFLEIETPILSKTTPEGARDYLVPSRVHEGEFFALPQSPQLFKQLLMVGGMDRYFQIARCFRDEDLRADRQPEFTQIDAEMSFCSENDVMGVVEDLLQEIFKAIGHNISKPFKRMPYKEAMENYGSDKPDLRFELPLIEVGDCFMDSSNAIFSNIAQDPKNKRIKALNVKGADAIFSRSVLKELEEFVCQFGAQGLAYLQIKEDGVKGPLVKFLSEKGLKNILEKTGAKTGDIVFFGAGDKKIVLDYMGRLRLKVAETLDLIDKDALNFLWVVNFPMFEKTENGYHAAHHPFTMPKNIECKDLEEIEAHAYDVVLNGVELGGGSIRIHKEEMQKKVFEKINIHEEEAQKKFGFLLEALKFGAPPHGGFAIGFDRLIMLMTKSSSIRDVIAFPKTQKASCLLTDAPSPINEEQLRELHIRLRK.

Glu171 contributes to the L-aspartate binding site. The tract at residues 195-198 (QLFK) is aspartate. Position 217 (Arg217) interacts with L-aspartate. ATP-binding positions include 217-219 (RDE) and Gln226. His444 is a binding site for L-aspartate. Glu474 is an ATP binding site. Position 481 (Arg481) interacts with L-aspartate. 526 to 529 (GFDR) is an ATP binding site.

This sequence belongs to the class-II aminoacyl-tRNA synthetase family. Type 1 subfamily. In terms of assembly, homodimer.

The protein resides in the cytoplasm. The enzyme catalyses tRNA(Asx) + L-aspartate + ATP = L-aspartyl-tRNA(Asx) + AMP + diphosphate. Functionally, aspartyl-tRNA synthetase with relaxed tRNA specificity since it is able to aspartylate not only its cognate tRNA(Asp) but also tRNA(Asn). Reaction proceeds in two steps: L-aspartate is first activated by ATP to form Asp-AMP and then transferred to the acceptor end of tRNA(Asp/Asn). The chain is Aspartate--tRNA(Asp/Asn) ligase from Helicobacter pylori (strain Shi470).